The sequence spans 274 residues: Hydroxyethylthiazole kinase (274 aa).

Methionine 50 lines the substrate pocket. ATP-binding residues include arginine 126 and serine 171. Residue alanine 200 coordinates substrate.

It belongs to the Thz kinase family. Mg(2+) serves as cofactor.

It catalyses the reaction 5-(2-hydroxyethyl)-4-methylthiazole + ATP = 4-methyl-5-(2-phosphooxyethyl)-thiazole + ADP + H(+). Its pathway is cofactor biosynthesis; thiamine diphosphate biosynthesis; 4-methyl-5-(2-phosphoethyl)-thiazole from 5-(2-hydroxyethyl)-4-methylthiazole: step 1/1. In terms of biological role, catalyzes the phosphorylation of the hydroxyl group of 4-methyl-5-beta-hydroxyethylthiazole (THZ). The protein is Hydroxyethylthiazole kinase of Acinetobacter baylyi (strain ATCC 33305 / BD413 / ADP1).